A 603-amino-acid polypeptide reads, in one-letter code: Terpenoid synthase 22 (603 aa).

Residues Asp356, Asp360, Asn500, and Glu508 each contribute to the Mg(2+) site. Residues 356–360 (DDTCD) carry the DDXXD motif motif.

The protein belongs to the terpene synthase family. Tpsa subfamily. Requires Mg(2+) as cofactor. Mn(2+) serves as cofactor. Predominantly expressed in siliques but also in flowers.

It is found in the cytoplasm. Its pathway is secondary metabolite biosynthesis; terpenoid biosynthesis. Its function is as follows. Involved in terpene biosynthesis in roots. Possesses sesquiterpene (C15) synthase activity in vitro. Does not seem to be involved in diterpene (C20) biosynthesis. This is Terpenoid synthase 22 from Arabidopsis thaliana (Mouse-ear cress).